The chain runs to 188 residues: Putative manganese efflux pump MntP (188 aa).

Transmembrane regions (helical) follow at residues 3–23 (LSAT…ASIG), 41–61 (LIFG…GMLA), 62–82 (SQFI…FLGG), 107–129 (LLVT…LAFL), 143–163 (ATFI…PLLG), and 168–188 (ILGG…HFAG).

Belongs to the MntP (TC 9.B.29) family.

Its subcellular location is the cell inner membrane. In terms of biological role, probably functions as a manganese efflux pump. This is Putative manganese efflux pump MntP from Klebsiella pneumoniae subsp. pneumoniae (strain ATCC 700721 / MGH 78578).